Consider the following 372-residue polypeptide: Flagellar P-ring protein (372 aa).

A signal peptide spans Met1–Ala29.

This sequence belongs to the FlgI family. In terms of assembly, the basal body constitutes a major portion of the flagellar organelle and consists of four rings (L,P,S, and M) mounted on a central rod.

Its subcellular location is the periplasm. The protein localises to the bacterial flagellum basal body. In terms of biological role, assembles around the rod to form the L-ring and probably protects the motor/basal body from shearing forces during rotation. The sequence is that of Flagellar P-ring protein from Anaeromyxobacter dehalogenans (strain 2CP-1 / ATCC BAA-258).